We begin with the raw amino-acid sequence, 217 residues long: Small ribosomal subunit protein uS3c (217 aa).

The KH type-2 domain maps to 46–117 (VQKHIKNSSN…RLRMTLIEIA (72 aa)).

This sequence belongs to the universal ribosomal protein uS3 family. As to quaternary structure, part of the 30S ribosomal subunit.

The protein resides in the plastid. The protein localises to the chloroplast. The chain is Small ribosomal subunit protein uS3c (rps3) from Marchantia polymorpha (Common liverwort).